We begin with the raw amino-acid sequence, 93 residues long: Putative sodium channel toxin Ts41 (93 aa).

Positions 1-23 (MKIGVLFTIISMLCLLEVRKICS) are cleaved as a signal peptide. Cystine bridges form between cysteine 22/cysteine 87, cysteine 39/cysteine 62, cysteine 48/cysteine 67, and cysteine 52/cysteine 69. Residues 26–88 (EGGYPRYFSF…FWNVYRKYCK (63 aa)) enclose the LCN-type CS-alpha/beta domain.

The protein belongs to the long (4 C-C) scorpion toxin superfamily. Expressed by the venom gland.

It is found in the secreted. Functionally, the edited BmKBTx-like may modulate voltage-gated sodium channels (Nav). The non-edited form is able to form a heterodimer. In orthologs, a heterodimer with LVP beta-chain induces lipolysis in rat adipocytes, which is mediated through the beta-2 adrenergic receptor pathway (ADRB2). Since no LVP beta-chains have been identified in the venom of this scorpion, it is possible that this protein is not involved in a lipolysis process. This chain is Putative sodium channel toxin Ts41, found in Tityus serrulatus (Brazilian scorpion).